A 357-amino-acid chain; its full sequence is MADSLVLLTGATGFIGFRILVELLRQGYSVRAVIRSAAKGQWLESRLTAVMKGSDYKDRFQTTIVADFVTDGAFDQAAENTSYIIHVASPIVSSDNPDDWEHDFKRVAVKGSIGVLEAAKRSGTVRRVVITSSMVGLFSPKALFAEPSEVPLNAESRIPEMEPPYAHKMLAYQAGKIASINSAEAWIKHEKPAFDLIHMHPSFVTGRDDLATTREDLRKFSSNWHSMQIVLGHKNPIGKPILTCHNDDVARCHVSALDPKVAGNQSFLISCSPEDGSEWDNVKKIVQREFPEAVAQGVLPNDGHMPTVNKGVRFDVRKTEETFGFKHIPYEAQVLDVVKQYLELPEKDEGVEISTTA.

NADP(+) is bound at residue Y172.

It belongs to the NAD(P)-dependent epimerase/dehydratase family. Dihydroflavonol-4-reductase subfamily.

The protein operates within mycotoxin biosynthesis. Its function is as follows. Ketoreductase; part of the gene cluster that mediates the biosynthesis of cercosporin, a light-activated, non-host-selective toxin. The perylenequinone chromophore of cercosporin absorbs light energy to attain an electronically-activated triplet state and produces active oxygen species such as the hydroxyl radical, superoxide, hydrogen peroxide or singlet oxygen upon reaction with oxygen molecules. These reactive oxygen species cause damage to various cellular components including lipids, proteins and nucleic acids. The first step of cercosporin biosynthesis is performed by the polyketide synthase CTB1 which catalyzes the formation of nor-toralactone. The starter unit acyltransferase (SAT) domain of CTB1 initiates polyketide extension by the selective utilization of acetyl-CoA, which is elongated to the heptaketide in the beta-ketoacyl synthase (KS) domain by successive condensations with six malonyl units introduced by the malonyl acyltransferase (MAT) domain. The product template (PT) domain catalyzes C4-C9 and C2-C11 aldol cyclizations and dehydrations to a trihydroxynaphthalene, which is thought to be delivered to the thioesterase (TE) domain for product release. The bifunctional enzyme CTB3 then methylates nor-toralactone to toralactone before conducting an unusual oxidative aromatic ring opening. The O-methyltransferase CTB2 further methylates the nascent OH-6 of the CBT3 product, blocking further oxidation at this site before the reductase CTB6 reduces the 2-oxopropyl ketone at position C7, giving naphthalene. The FAD-dependent monooxygenase CTB5 in concert with the multicopper oxidase CTB12 are responsible for homodimerization of naphthalene with CTB7 installing the dioxepine moiety, finally producing cercosporin. The fasciclin domain-containing protein CTB11 might act with CTB5 and CTB12 whereas the roles of CTB9 and CTB10 have still to be elucidated. The sequence is that of Ketoreductase CTB6 from Cercospora nicotianae (Barn spot disease fungus).